The sequence spans 1021 residues: Solute carrier family 12 member 3 (1021 aa).

Residues 1–137 (MAELPTTETP…KNPEEPVRFG (137 aa)) lie on the Cytoplasmic side of the membrane. Ser-43 is modified (phosphoserine). Thr-46 bears the Phosphothreonine; by OXSR1 and STK39 mark. Position 49 is a phosphoserine (Ser-49). The residue at position 50 (Thr-50) is a Phosphothreonine. Residues Thr-55 and Thr-60 each carry the phosphothreonine; by OXSR1 and STK39 modification. Ser-73 is modified (phosphoserine). Ser-91 bears the Phosphoserine; by OXSR1 and STK39 mark. Position 124 is a phosphothreonine (Thr-124). At Ser-126 the chain carries Phosphoserine. The discontinuously helical transmembrane segment at 138–167 (WVKGVMIRCMLNIWGVILYLRLPWITAQAG) threads the bilayer. Residue Leu-148 coordinates Na(+). Position 149 (Asn-149) interacts with polythiazide. Trp-151 serves as a coordination point for Na(+). A helical membrane pass occupies residues 168–189 (IVLTWIIILLSVTVTSITGLSI). Residues 190 to 220 (SAISTNGKVKSGGTYFLISRSLGPELGGSIG) are Cytoplasmic-facing. A helical transmembrane segment spans residues 221-243 (LIFAFANAVGVAMHTVGFAETVR). Positions 227 and 234 each coordinate polythiazide. Residues 244–255 (DLLQEYGAPIVD) are Extracellular-facing. The next 2 membrane-spanning stretches (helical) occupy residues 256 to 280 (PIND…AGME) and 281 to 303 (WESK…YLVG). Topologically, residues 304–338 (TLIPPSEDKASKGFFSYRADIFVQNLVPDWRGPDG) are extracellular. The discontinuously helical transmembrane segment at 339–360 (TFFGMFSIFFPSATGILAGANI) threads the bilayer. Thr-352 contributes to the polythiazide binding site. Gly-353, Ile-354, and Leu-355 together coordinate chloride. Position 359 (Asn-359) interacts with polythiazide. Topologically, residues 361 to 371 (SGDLKDPAIAI) are cytoplasmic. Residues 372-393 (PKGTLMAIFWTTISYLAISATI) traverse the membrane as a helical segment. Over 394–453 (GSCVVRDASGVLNDTVTPGWGACEGLACSYGWNFTECTQQHSCHYGLINYYQTMSMVSGF) the chain is Extracellular. Asn-406 is a glycosylation site (N-linked (GlcNAc...) asparagine). The cysteines at positions 416 and 421 are disulfide-linked. Asn-426 carries N-linked (GlcNAc...) asparagine glycosylation. Cysteines 430 and 436 form a disulfide. A helical transmembrane segment spans residues 454 to 477 (APLITAGIFGATLSSALACLVSAA). Na(+) contacts are provided by Ala-464, Ser-467, and Ser-468. Over 478–507 (KVFQCLCEDQLYPLIGFFGKGYGKNKEPVR) the chain is Cytoplasmic. Residues 508–522 (GYLLAYAIAVAFIII) form a helical membrane-spanning segment. Topologically, residues 523–527 (AELNT) are extracellular. The chain crosses the membrane as a helical span at residues 528-544 (IAPIISNFFLCSYALIN). Tyr-540 contacts chloride. Topologically, residues 545-567 (FSCFHASITNSPGWRPSFQYYNK) are cytoplasmic. Helical transmembrane passes span 568 to 587 (WAAL…LTWW) and 588 to 599 (AALIAIGVVLFL). At 600-1021 (LLYVIYKKPE…QENVLTFYCQ (422 aa)) the chain is on the cytoplasmic side. Residues 615 to 630 (SVQAGSYNLALSYSVG) form a scissor helix region. ATP is bound by residues Leu-648, Arg-655, Val-677, Gly-741, Leu-780, and Asn-781.

The protein belongs to the SLC12A transporter family. As to quaternary structure, homodimer; adopts a domain-swap conformation at the scissor helices connecting the transmembrane domain and C-terminal domain. Interacts with KLHL3. Interacts with IL18R1; this interaction is increased by IL18 treatment. In terms of processing, ubiquitinated; ubiquitination is essential for regulation of endocytosis. The BCR(KLHL3) complex was initially identified as a candidate ubiquitin ligase for SLC12A3. However, it was later shown that it is not the case. Post-translationally, phosphorylated at Thr-46, Thr-55, Thr-60 and Ser-91 by OXSR1/OSR1 and STK39/SPAK downstream of WNK4, promoting its activity. Phosphorylated in response to IL18. Predominantly expressed in the kidney (at protein level). Localizes to the distal convoluted tubules (at protein level). Not detected in normal aorta, but abundantly expressed in fatty streaks and advanced atherosclerotic lesions (at protein level).

The protein localises to the cell membrane. It localises to the apical cell membrane. The enzyme catalyses chloride(out) + Na(+)(out) = chloride(in) + Na(+)(in). Phosphorylation by OXSR1/OSR1 and STK39/SPAK in kidney distal convoluted tubules downstream of WNK4 promotes its activity. Also activated by OXSR1/OSR1 and STK39/SPAK downstream of WNK3. Target of thiazide diuretics used in the treatment of high blood pressure. Thiazide drugs, such as polythiazide, specifically inhibit SLC12A3/NCC transporter activity by competing with chloride for binding and by locking SLC12A3/NCC in an outward-facing conformation. Its function is as follows. Electroneutral sodium and chloride ion cotransporter, which acts as a key mediator of sodium and chloride reabsorption in kidney distal convoluted tubules. Also acts as a receptor for the pro-inflammatory cytokine IL18, thereby contributing to IL18-induced cytokine production, including IFNG, IL6, IL18 and CCL2. May act either independently of IL18R1, or in a complex with IL18R1. The sequence is that of Solute carrier family 12 member 3 from Homo sapiens (Human).